Consider the following 348-residue polypeptide: Lysophosphatidic acid receptor 2 (348 aa).

At 1–30 (MGQCYYNETIGFFYNNSGKELSLHWRPKDV) the chain is on the extracellular side. N7 and N15 each carry an N-linked (GlcNAc...) asparagine glycan. A helical transmembrane segment spans residues 31-51 (VVVALGLTVSVLVLLTNLLVI). At 52 to 66 (AAIASNRRFHQPIYY) the chain is on the cytoplasmic side. Residues 67–87 (LLGNLAAADLFAGMAYLFLMF) traverse the membrane as a helical segment. The Extracellular segment spans residues 88–104 (HTGPRTARLSIKGWFLR). The helical transmembrane segment at 105 to 124 (QGLLDTSLTASVATLLAIAV) threads the bilayer. The Cytoplasmic segment spans residues 125–144 (ERHRSVMAVQLHSRLPRGRV). The chain crosses the membrane as a helical span at residues 145–165 (VTLIVGVWAAALGLGLLPAHF). The Extracellular segment spans residues 166–185 (WHCLCDLDSCSRMVPLFSRS). Residues 186–206 (YLAAWALSSLLVFLLMVAVYT) form a helical membrane-spanning segment. Residues 207-239 (RIFFYVRRRVERMAEHVSCHPRYRETTLSLVKT) lie on the Cytoplasmic side of the membrane. The helical transmembrane segment at 240 to 260 (VVIILGAFVVCWTPGQVVLLL) threads the bilayer. Residues 261–270 (DGLDCKSCNV) are Extracellular-facing. A helical transmembrane segment spans residues 271-291 (LAVEKYFLLLAEANSLVNAVV). Over 292 to 348 (YSCRDAEMRRTFRRLLCCMCLRWSSHKSARYSASAQTGASTRIMLPENGRPLMDSTL) the chain is Cytoplasmic. C308 carries S-palmitoyl cysteine lipidation. Positions 345–348 (DSTL) match the PDZ-binding motif.

Belongs to the G-protein coupled receptor 1 family. Interacts with SLC9A3R2/NHERF2, MAGI3 and PLCB3. Interacts with RALA and GRK2. Most abundantly expressed in testes, kidney, and embryonic brain. Other organs also express the transcript, including heart, lung, spleen, thymus, stomach, and adult brain. Several have little or no expression, including liver, small intestine, and skeletal muscle.

The protein localises to the cell surface. The protein resides in the cell membrane. Receptor for lysophosphatidic acid (LPA), a mediator of diverse cellular activities. Seems to be coupled to the G(i)/G(o), G(12)/G(13), and G(q) families of heteromeric G proteins. Plays a key role in phospholipase C-beta (PLC-beta) signaling pathway Stimulates phospholipase C (PLC) activity in a manner that is independent of RALA activation. This is Lysophosphatidic acid receptor 2 from Mus musculus (Mouse).